Here is a 232-residue protein sequence, read N- to C-terminus: Flagellar L-ring protein (232 aa).

Positions 1–21 (MQKNAAHTYAISSLLVLSLTG) are cleaved as a signal peptide. Cys-22 is lipidated: N-palmitoyl cysteine. Cys-22 is lipidated: S-diacylglycerol cysteine.

This sequence belongs to the FlgH family. As to quaternary structure, the basal body constitutes a major portion of the flagellar organelle and consists of four rings (L,P,S, and M) mounted on a central rod.

The protein localises to the cell outer membrane. The protein resides in the bacterial flagellum basal body. Assembles around the rod to form the L-ring and probably protects the motor/basal body from shearing forces during rotation. The polypeptide is Flagellar L-ring protein (flgH) (Shigella flexneri).